A 437-amino-acid polypeptide reads, in one-letter code: U1 small nuclear ribonucleoprotein 70 kDa (437 aa).

Thr-2 carries the post-translational modification N-acetylthreonine. The disordered stretch occupies residues 48–79 (FEDPRDAPPPTRAETREERMERKRREKIERRQ). Over residues 60–79 (AETREERMERKRREKIERRQ) the composition is skewed to basic and acidic residues. Residues 92 to 202 (HNDPNAQGDA…GGGLGGTRRG (111 aa)) are required for interaction with U1 RNA. The region spanning 103–181 (KTLFVARVNY…RRVLVDVERG (79 aa)) is the RRM domain. N6-acetyllysine is present on Lys-118. Tyr-126 carries the post-translational modification Phosphotyrosine. Residues 187 to 437 (WRPRRLGGGL…NGYLMEAAPE (251 aa)) are disordered. Residues 192 to 201 (LGGGLGGTRR) are compositionally biased toward gly residues. The span at 207-254 (NIRHSGRDDTSRYDERPGPSPLPHRDRDRDRERERRERSRERDKERER) shows a compositional bias: basic and acidic residues. Phosphoserine occurs at positions 226 and 268. The span at 255-268 (RRSRSRDRRRRSRS) shows a compositional bias: basic residues. Basic and acidic residues-rich tracts occupy residues 269 to 286 (RDKE…DKDR) and 294 to 310 (RSRE…EELR). Ser-320 carries the phosphoserine modification. Residues 343–393 (PEEKGRDRDRERRRSHRSERERRRDRDRDRDRDREHKRGERGSERGRDEAR) show a composition bias toward basic and acidic residues. A Glycyl lysine isopeptide (Lys-Gly) (interchain with G-Cter in SUMO2) cross-link involves residue Lys-346. A Phosphoserine modification is found at Ser-410.

As to quaternary structure, component of the U1 snRNP. The U1 snRNP is composed of the U1 snRNA and the 7 core Sm proteins SNRPB, SNRPD1, SNRPD2, SNRPD3, SNRPE, SNRPF and SNRPG that assemble in a heptameric protein ring on the Sm site of the small nuclear RNA to form the core snRNP, and at least three U1 snRNP-specific proteins SNRNP70/U1-70K, SNRPA/U1-A and SNRPC/U1-C. Interacts with SCNM1. Found in a pre-mRNA splicing complex with SFRS4, SFRS5, SNRNP70, SNRPA1, SRRM1 and SRRM2. Found in a pre-mRNA exonic splicing enhancer (ESE) complex with SNRNP70, SNRPA1, SRRM1 and TRA2B/SFRS10. Interacts with dephosphorylated SFRS13A and SFPQ. Interacts with NUDT21/CPSF5, CPSF6, SCAF11, and ZRANB2. Interacts with GEMIN5. Interacts with FUS. The N-terminus is blocked. In terms of processing, extensively phosphorylated on serine residues in the C-terminal region.

Its subcellular location is the nucleus speckle. It is found in the nucleus. The protein localises to the nucleoplasm. Component of the spliceosomal U1 snRNP, which is essential for recognition of the pre-mRNA 5' splice-site and the subsequent assembly of the spliceosome. SNRNP70 binds to the loop I region of U1-snRNA. Functionally, truncated isoforms that lack the RRM domain cannot bind U1-snRNA. The sequence is that of U1 small nuclear ribonucleoprotein 70 kDa (SNRNP70) from Homo sapiens (Human).